The primary structure comprises 358 residues: Adenosine deaminase (358 aa).

His-14 and His-16 together coordinate Zn(2+). Substrate is bound by residues His-16, Asp-18, and Gly-183. His-212 contacts Zn(2+). Glu-215 (proton donor) is an active-site residue. Residue Asp-294 participates in Zn(2+) binding. Substrate is bound at residue Asp-295.

The protein belongs to the metallo-dependent hydrolases superfamily. Adenosine and AMP deaminases family. Requires Zn(2+) as cofactor.

It is found in the cell membrane. The protein localises to the cell junction. It localises to the cytoplasmic vesicle lumen. The protein resides in the cytoplasm. Its subcellular location is the lysosome. The enzyme catalyses adenosine + H2O + H(+) = inosine + NH4(+). The catalysed reaction is 2'-deoxyadenosine + H2O + H(+) = 2'-deoxyinosine + NH4(+). Its function is as follows. Catalyzes the hydrolytic deamination of adenosine and 2-deoxyadenosine. Plays an important role in purine metabolism and in adenosine homeostasis. Modulates signaling by extracellular adenosine, and so contributes indirectly to cellular signaling events. May act as a positive regulator of T-cell coactivation. The chain is Adenosine deaminase (ada) from Xenopus laevis (African clawed frog).